A 49-amino-acid polypeptide reads, in one-letter code: Defensin Tk-AMP-D1 (49 aa).

Disulfide bonds link cysteine 3/cysteine 49, cysteine 14/cysteine 34, cysteine 20/cysteine 43, and cysteine 24/cysteine 45.

Functionally, has weak antifungal activity against F.graminearum and F.verticillioides below 30 ug/ml, but not against A.consortiale B.cinerea, H.sativum, F.culmorum, C.graminicola and D.maydis. The protein is Defensin Tk-AMP-D1 of Triticum kiharae (Wheat).